Here is a 155-residue protein sequence, read N- to C-terminus: Small ribosomal subunit protein uS7cz/uS7cy (155 aa).

The protein belongs to the universal ribosomal protein uS7 family. Part of the 30S ribosomal subunit.

It localises to the plastid. Its subcellular location is the chloroplast. In terms of biological role, one of the primary rRNA binding proteins, it binds directly to 16S rRNA where it nucleates assembly of the head domain of the 30S subunit. This Daucus carota (Wild carrot) protein is Small ribosomal subunit protein uS7cz/uS7cy (rps7-A).